The chain runs to 181 residues: MVKTNILSNHFLVAMPQLNDFTFTKAVIYVSQHDAKGALGIIINRPLALTLGKVLEHLNIEIAQPQIANHPVLMGGPIGQEHGFIVYEQESPQGAEILLSASKDMLDDIAKNKGPDDFLITLGYAGWEAGQLENEIARNDWLVVPFNRKILFETPLKSRWQKAAALIGVDINQLSGQIGHA.

Belongs to the UPF0301 (AlgH) family.

In Coxiella burnetii (strain RSA 331 / Henzerling II), this protein is UPF0301 protein COXBURSA331_A2219.